A 207-amino-acid chain; its full sequence is Outer-membrane lipoprotein carrier protein (207 aa).

Positions methionine 1 to alanine 22 are cleaved as a signal peptide.

It belongs to the LolA family. In terms of assembly, monomer.

Its subcellular location is the periplasm. Participates in the translocation of lipoproteins from the inner membrane to the outer membrane. Only forms a complex with a lipoprotein if the residue after the N-terminal Cys is not an aspartate (The Asp acts as a targeting signal to indicate that the lipoprotein should stay in the inner membrane). This chain is Outer-membrane lipoprotein carrier protein, found in Nitrosospira multiformis (strain ATCC 25196 / NCIMB 11849 / C 71).